We begin with the raw amino-acid sequence, 736 residues long: MSNEGQCPFNHANGGGTTNRDWWPNELRLDLLSQHSSKTDPLDPGFNYAEAFNSLDLDALRKDLAALMTDSQDWWPADFGHYGPLFVRMAWHSAGTYRMGDGRGGAGRGQQRFAPLNSWPDNVSLDKARRLLWPIKQKYGQKISWADLLILTGDVALTTMGFKTFGYAGGREDTWEPDRDVYWGSETTWLGGDLRYDKGGACESQHGGNAGRNLENPLAAVQMGLIYVNPEGPDGNPDPVAAAYDIREVFGRMAMNDEETVALIAGGHAFGKTHGAGPADNVGLEPEAAGLEQQGLGWKNSFGTGKGADTITSGLEVTWSDTPTQWGMGFFKNLFGYEWELTKSPAGAHQWVAKNAEPTIPHAHDPSKKLLPTMLTTDLSLRFDPVYEKISRHFMDNPDVFADAFARAWFKLTHRDMGPRARYLGPDVPTEELIWQDPIPAVDHVLVDDTDVAPLKETILASGLSVAELVSTAWASASTFRGSDKRGGANGARIRLAPQKDWAVNEPARLAKVLKVLERIQGEFNSTQPGGKKISLADLIVLAGGAGIEQAAKRAGHDVVVPFAPGRMDASQEQTDAHSFAVLEPVADGFRNFVKGKFAVPAEALLIDKAQLLTLTAPQMTALVGGLRVLNVQTGDEKHGVFTDQPETLTVDFFRNLLDMATEWKPIAGEDTYEGRDRRTGELKWTGTRVDLVFGSNAVLRALSEVYASADGEAKFIRDFVAAWVKVMNLDRFDLA.

The segment at residues 91–227 is a cross-link (tryptophyl-tyrosyl-methioninium (Trp-Tyr) (with M-253)); the sequence is WHSAGTYRMG…LAAVQMGLIY (137 aa). The Proton acceptor role is filled by H92. Residues 227–253 constitute a cross-link (tryptophyl-tyrosyl-methioninium (Tyr-Met) (with W-91)); it reads YVNPEGPDGNPDPVAAAYDIREVFGRM. Position 268 (H268) interacts with heme b.

It belongs to the peroxidase family. Peroxidase/catalase subfamily. In terms of assembly, homodimer or homotetramer. The cofactor is heme b. Post-translationally, formation of the three residue Trp-Tyr-Met cross-link is important for the catalase, but not the peroxidase activity of the enzyme.

It catalyses the reaction H2O2 + AH2 = A + 2 H2O. The enzyme catalyses 2 H2O2 = O2 + 2 H2O. Functionally, bifunctional enzyme with both catalase and broad-spectrum peroxidase activity. Shows peroxidase specificity towards odianisidine, ABTS and pyrogallol, but methoxyphenol and 2-chloronaphthol are not peroxidized. The chain is Catalase-peroxidase 2 from Burkholderia cenocepacia (strain ATCC BAA-245 / DSM 16553 / LMG 16656 / NCTC 13227 / J2315 / CF5610) (Burkholderia cepacia (strain J2315)).